Consider the following 984-residue polypeptide: Hyaluronate lyase (984 aa).

Polar residues-rich tracts occupy residues 1–12, 19–32, and 54–66; these read MKQVVDNQTQNK, DFNQ…SWSH, and IQRT…SLSS. Disordered stretches follow at residues 1–32 and 49–68; these read MKQV…SWSH and DKSP…SSDK. Positions 1–40 are cleaved as a signal peptide; it reads MKQVVDNQTQNKELVKNGDFNQTNPVSGSWSHTSAREWSA. Residues asparagine 429, histidine 479, and tyrosine 488 contribute to the active site. Residues 701–726 are compositionally biased toward basic and acidic residues; that stretch reads TEKDAKREDTTKEFMSKHSKDAKEKT. The tract at residues 701–728 is disordered; the sequence is TEKDAKREDTTKEFMSKHSKDAKEKTGQ.

Belongs to the polysaccharide lyase 8 family.

Its subcellular location is the secreted. It catalyses the reaction [hyaluronan](n) = n 3-(4-deoxy-beta-D-gluc-4-enuronosyl)-N-acetyl-D-glucosamine + H2O. The polypeptide is Hyaluronate lyase (Streptococcus agalactiae serotype III (strain NEM316)).